A 481-amino-acid polypeptide reads, in one-letter code: Glutamate--tRNA ligase (481 aa).

Residues 10–20 carry the 'HIGH' region motif; that stretch reads PSPTGHLHIGN. A 'KMSKS' region motif is present at residues 251–255; the sequence is KLSKR. Lysine 254 contacts ATP.

Belongs to the class-I aminoacyl-tRNA synthetase family. Glutamate--tRNA ligase type 1 subfamily. As to quaternary structure, monomer.

The protein localises to the cytoplasm. It catalyses the reaction tRNA(Glu) + L-glutamate + ATP = L-glutamyl-tRNA(Glu) + AMP + diphosphate. Functionally, catalyzes the attachment of glutamate to tRNA(Glu) in a two-step reaction: glutamate is first activated by ATP to form Glu-AMP and then transferred to the acceptor end of tRNA(Glu). The chain is Glutamate--tRNA ligase from Exiguobacterium sibiricum (strain DSM 17290 / CCUG 55495 / CIP 109462 / JCM 13490 / 255-15).